The following is a 520-amino-acid chain: MFAQPYDHSFNDLFNQYVNMETSAADGKDSTLSDFDQLFPLDSLSSDCGDLPPTVSTPNCHQSPQPWSNEWSLQNDGPAVDHFAFHDTVPLSAISDVNLNNFEVLSRPTATHALSTSPSTPPATPRRKPTQSALITPKSIRHRCPNERRSHLCKQSFSPSLMRSSNLSKARMAYPEAWAQQIQSFSLQSSEDRLPLSPPPSDVLIQHENRPAEQIMHQTRDSVEMPSQYDARLYHQPPSVSMPSPNIAMSARQPQHYIAHPSSSTLTNSSPSSADDMFSSSHSSDPHSLSSWQSDHLHPPSFSFTPDLQCQDSQWWSPMTSRVAQQQASYLTSPTPVRTMQSVGSQNDIMQGGLMIQFNPSYDMPADHSFSSNNMLPVAPQKFDTSFTTSQVHNVSRSPSLSPKAGTSPRDTHNGSISKPVHRRTHSRKLSGQSMNAPKPAKASGSSSRGSNKSVSVSFVNFTAHDSKKILTGVAPSGSSKTKARREQEARDRRRKLSEAALRAVRSAGGDVEALEAVLC.

4 disordered regions span residues 110 to 149, 260 to 294, 388 to 453, and 471 to 496; these read ATHALSTSPSTPPATPRRKPTQSALITPKSIRHRCPNERR, HPSSSTLTNSSPSSADDMFSSSHSSDPHSLSSWQS, TTSQ…GSNK, and LTGVAPSGSSKTKARREQEARDRRRK. A compositionally biased stretch (low complexity) spans 261-294; it reads PSSSTLTNSSPSSADDMFSSSHSSDPHSLSSWQS. The segment covering 388–401 has biased composition (polar residues); the sequence is TTSQVHNVSRSPSL. Residues 420-429 are compositionally biased toward basic residues; it reads PVHRRTHSRK. Residues 436 to 453 show a composition bias toward low complexity; that stretch reads NAPKPAKASGSSSRGSNK.

Belongs to the wetA family.

Its function is as follows. BrlA, abaA and wetA are pivotal regulators of conidiophore development and conidium maturation. They act individually and together to regulate their own expression and that of numerous other sporulation-specific genes. Plays a crucial role in pigmentation and conidial cell wall integrity. This is Developmental regulatory protein wetA from Penicillium digitatum (strain PHI26 / CECT 20796) (Green mold).